The chain runs to 599 residues: Interleukin-18 receptor accessory protein (599 aa).

Positions M1–G19 are cleaved as a signal peptide. At F20–R356 the chain is on the extracellular side. N21, N119, and N152 each carry an N-linked (GlcNAc...) asparagine glycan. Cysteines 46 and 126 form a disulfide. Ig-like C2-type domains lie at P149 to R235 and P251 to K353. 4 cysteine pairs are disulfide-bonded: C155–C180, C175–C221, C180–C221, and C273–C337. N345 is a glycosylation site (N-linked (GlcNAc...) asparagine). The helical transmembrane segment at G357–A377 threads the bilayer. Over S378–W599 the chain is Cytoplasmic. In terms of domain architecture, TIR spans K406–M559. The active site involves E493.

It belongs to the interleukin-1 receptor family. Forms a ternary complex with IL18 and IL18R1. Within this complex, IL18R1 is involved in ligand-binding and IL18RAP in signaling leading to NF-kappa-B and JNK activation. In terms of processing, N-glycosylated. In terms of tissue distribution, detected in adrenal gland, bone marrow, brain, fetal brain, fetal liver, heart, kidney, lung, liver, peripheral blood leukocytes, placenta, prostate, salivary gland, skeletal muscle, spinal cord, testis, thymus, thyroid, trachea and uterus. Strongly expressed in peripheral blood leukocytes and spleen and, to a lesser extent, in colon. Specifically coexpressed with IL18R1 in T-helper 1 (Th1)cells.

It is found in the cell membrane. The catalysed reaction is NAD(+) + H2O = ADP-D-ribose + nicotinamide + H(+). Functionally, within the IL18 receptor complex, does not mediate IL18-binding, but involved in IL18-dependent signal transduction, leading to NF-kappa-B and JNK activation. May play a role in IL18-mediated IFNG synthesis from T-helper 1 (Th1) cells. In Homo sapiens (Human), this protein is Interleukin-18 receptor accessory protein.